The chain runs to 468 residues: Glutamate--tRNA ligase (468 aa).

The 'HIGH' region signature appears at 9–19 (PSPTGSIHIGN). A 'KMSKS' region motif is present at residues 239-243 (KLSKR). Position 242 (lysine 242) interacts with ATP.

This sequence belongs to the class-I aminoacyl-tRNA synthetase family. Glutamate--tRNA ligase type 1 subfamily. Monomer.

The protein localises to the cytoplasm. It catalyses the reaction tRNA(Glu) + L-glutamate + ATP = L-glutamyl-tRNA(Glu) + AMP + diphosphate. Its function is as follows. Catalyzes the attachment of glutamate to tRNA(Glu) in a two-step reaction: glutamate is first activated by ATP to form Glu-AMP and then transferred to the acceptor end of tRNA(Glu). This chain is Glutamate--tRNA ligase, found in Blochmanniella pennsylvanica (strain BPEN).